The primary structure comprises 385 residues: Suppressor protein STP22 of temperature-sensitive alpha-factor receptor and arginine permease (385 aa).

Residues 12-161 enclose the UEV domain; that stretch reads AVVNWLFKVI…LHEPPQDQAP (150 aa). A disordered region spans residues 155 to 219; the sequence is PPQDQAPSLP…DMDNTDISPT (65 aa). The segment covering 168 to 177 has biased composition (polar residues); it reads NTQLQQEQNT. A compositionally biased stretch (pro residues) spans 178–201; sequence PPLPPKPKSPHLKPPLPPPPPPQP. A coiled-coil region spans residues 272–300; the sequence is LRAVEQAIEQTMHSLNAQIDVLTANRAKV. Positions 322–385 constitute an SB domain; it reads TDGLNQLYNL…HIQRITSPLS (64 aa).

Belongs to the ubiquitin-conjugating enzyme family. UEV subfamily. As to quaternary structure, component of the ESCRT-I complex (endosomal sorting complex required for transport I) which consists of STP22, VPS28, SRN2 and MVB12 in a 1:1:1:1 stoichiometry. Interacts with HSE1 and VPS27. Interacts with MVB12 and SRN2.

It localises to the cytoplasm. Its subcellular location is the endosome. The protein resides in the late endosome membrane. Component of the ESCRT-I complex, a regulator of vesicular trafficking process. Binds to ubiquitinated cargo proteins and is required for the sorting of endocytic ubiquitinated cargos into multivesicular bodies (MVBs). Mediates the association to the ESCRT-0 complex. Required for vacuolar targeting of temperature-sensitive plasma membrane proteins STE2 and CAN1. This Saccharomyces cerevisiae (strain ATCC 204508 / S288c) (Baker's yeast) protein is Suppressor protein STP22 of temperature-sensitive alpha-factor receptor and arginine permease (STP22).